A 109-amino-acid polypeptide reads, in one-letter code: uncharacterized protein (109 aa).

The protein localises to the mitochondrion. This is an uncharacterized protein from Saccharomyces cerevisiae (strain ATCC 204508 / S288c) (Baker's yeast).